The chain runs to 132 residues: ATP synthase epsilon chain (132 aa).

It belongs to the ATPase epsilon chain family. F-type ATPases have 2 components, CF(1) - the catalytic core - and CF(0) - the membrane proton channel. CF(1) has five subunits: alpha(3), beta(3), gamma(1), delta(1), epsilon(1). CF(0) has three main subunits: a, b and c.

The protein resides in the cell inner membrane. Produces ATP from ADP in the presence of a proton gradient across the membrane. This chain is ATP synthase epsilon chain, found in Anaeromyxobacter sp. (strain Fw109-5).